The sequence spans 1760 residues: Chitin synthase A (1760 aa).

N-linked (GlcNAc...) asparagine glycosylation is present at Asn157. 2 helical membrane passes run Ile729–Val749 and Leu765–Phe785. Residues Asn876 and Asn996 are each glycosylated (N-linked (GlcNAc...) asparagine). The helical transmembrane segment at Ile1027–Leu1047 threads the bilayer. N-linked (GlcNAc...) asparagine glycosylation occurs at Asn1392. The next 3 membrane-spanning stretches (helical) occupy residues Phe1417–Gly1437, Ile1449–Ile1469, and Ile1477–Tyr1497. Asn1557, Asn1645, and Asn1650 each carry an N-linked (GlcNAc...) asparagine glycan. Residues Asp1670–Pro1691 are disordered. The DEK-C domain maps to Gly1702–Ala1758.

The protein belongs to the chitin synthase family. Class V subfamily.

The protein localises to the cell membrane. It carries out the reaction [(1-&gt;4)-N-acetyl-beta-D-glucosaminyl](n) + UDP-N-acetyl-alpha-D-glucosamine = [(1-&gt;4)-N-acetyl-beta-D-glucosaminyl](n+1) + UDP + H(+). Its function is as follows. Polymerizes chitin, a structural polymer of the cell wall and septum, by transferring the sugar moiety of UDP-GlcNAc to the non-reducing end of the growing chitin polymer. Plays an important role in cell-wall formation during both hyphal growth and conidiation. The chain is Chitin synthase A from Aspergillus oryzae (strain ATCC 42149 / RIB 40) (Yellow koji mold).